We begin with the raw amino-acid sequence, 445 residues long: 6-phosphogluconate dehydrogenase, decarboxylating (445 aa).

NADP(+)-binding positions include 1 to 4 (AVMG), 22 to 24 (NRS), 63 to 65 (VKA), and N91. Substrate contacts are provided by residues N91 and 117–119 (SGG). The Proton acceptor role is filled by K172. Residue 175–176 (HN) participates in substrate binding. The Proton donor role is filled by E179. Residues Y180, K249, R276, R434, and H440 each coordinate substrate.

The protein belongs to the 6-phosphogluconate dehydrogenase family. In terms of assembly, homodimer.

The catalysed reaction is 6-phospho-D-gluconate + NADP(+) = D-ribulose 5-phosphate + CO2 + NADPH. It participates in carbohydrate degradation; pentose phosphate pathway; D-ribulose 5-phosphate from D-glucose 6-phosphate (oxidative stage): step 3/3. Functionally, catalyzes the oxidative decarboxylation of 6-phosphogluconate to ribulose 5-phosphate and CO(2), with concomitant reduction of NADP to NADPH. This chain is 6-phosphogluconate dehydrogenase, decarboxylating (gnd), found in Shigella sonnei.